The primary structure comprises 311 residues: GTPase Era (311 aa).

Residues 18-185 form the Era-type G domain; sequence RSGFVALIGA…AKYLAESVPN (168 aa). Positions 26–33 are G1; sequence GAPNAGKS. 26–33 is a binding site for GTP; that stretch reads GAPNAGKS. The segment at 52–56 is G2; that stretch reads QTTRA. Residues 73–76 are G3; that stretch reads DTPG. Residues 73 to 77 and 135 to 138 contribute to the GTP site; these read DTPGI and NKVD. The segment at 135-138 is G4; the sequence is NKVD. Residues 164–166 are G5; that stretch reads ISA. One can recognise a KH type-2 domain in the interval 216 to 293; it reads LHEELPYAST…HLFLFVKVRE (78 aa).

It belongs to the TRAFAC class TrmE-Era-EngA-EngB-Septin-like GTPase superfamily. Era GTPase family. In terms of assembly, monomer.

It is found in the cytoplasm. It localises to the cell inner membrane. Its function is as follows. An essential GTPase that binds both GDP and GTP, with rapid nucleotide exchange. Plays a role in 16S rRNA processing and 30S ribosomal subunit biogenesis and possibly also in cell cycle regulation and energy metabolism. This Brucella suis biovar 1 (strain 1330) protein is GTPase Era.